A 982-amino-acid chain; its full sequence is Glycine dehydrogenase (decarboxylating) (982 aa).

The residue at position 729 (Lys-729) is an N6-(pyridoxal phosphate)lysine.

The protein belongs to the GcvP family. The glycine cleavage system is composed of four proteins: P, T, L and H. Pyridoxal 5'-phosphate serves as cofactor.

It carries out the reaction N(6)-[(R)-lipoyl]-L-lysyl-[glycine-cleavage complex H protein] + glycine + H(+) = N(6)-[(R)-S(8)-aminomethyldihydrolipoyl]-L-lysyl-[glycine-cleavage complex H protein] + CO2. Its function is as follows. The glycine cleavage system catalyzes the degradation of glycine. The P protein binds the alpha-amino group of glycine through its pyridoxal phosphate cofactor; CO(2) is released and the remaining methylamine moiety is then transferred to the lipoamide cofactor of the H protein. This is Glycine dehydrogenase (decarboxylating) from Ralstonia nicotianae (strain ATCC BAA-1114 / GMI1000) (Ralstonia solanacearum).